We begin with the raw amino-acid sequence, 259 residues long: Deoxyribose-phosphate aldolase (259 aa).

Aspartate 102 acts as the Proton donor/acceptor in catalysis. The Schiff-base intermediate with acetaldehyde role is filled by lysine 167. Lysine 201 (proton donor/acceptor) is an active-site residue.

This sequence belongs to the DeoC/FbaB aldolase family. DeoC type 2 subfamily.

It is found in the cytoplasm. It catalyses the reaction 2-deoxy-D-ribose 5-phosphate = D-glyceraldehyde 3-phosphate + acetaldehyde. Its pathway is carbohydrate degradation; 2-deoxy-D-ribose 1-phosphate degradation; D-glyceraldehyde 3-phosphate and acetaldehyde from 2-deoxy-alpha-D-ribose 1-phosphate: step 2/2. Catalyzes a reversible aldol reaction between acetaldehyde and D-glyceraldehyde 3-phosphate to generate 2-deoxy-D-ribose 5-phosphate. The chain is Deoxyribose-phosphate aldolase from Salmonella typhi.